A 248-amino-acid chain; its full sequence is Probable phosphatase Sfri_3709 (248 aa).

The Zn(2+) site is built by His-8, His-10, His-16, His-41, Glu-74, His-102, His-132, Asp-193, and His-195.

It belongs to the PHP family. Zn(2+) serves as cofactor.

This chain is Probable phosphatase Sfri_3709, found in Shewanella frigidimarina (strain NCIMB 400).